The following is a 194-amino-acid chain: Imidazoleglycerol-phosphate dehydratase (194 aa).

It belongs to the imidazoleglycerol-phosphate dehydratase family.

It is found in the cytoplasm. It catalyses the reaction D-erythro-1-(imidazol-4-yl)glycerol 3-phosphate = 3-(imidazol-4-yl)-2-oxopropyl phosphate + H2O. It functions in the pathway amino-acid biosynthesis; L-histidine biosynthesis; L-histidine from 5-phospho-alpha-D-ribose 1-diphosphate: step 6/9. This chain is Imidazoleglycerol-phosphate dehydratase, found in Sulfurisphaera tokodaii (strain DSM 16993 / JCM 10545 / NBRC 100140 / 7) (Sulfolobus tokodaii).